Here is a 350-residue protein sequence, read N- to C-terminus: Biotin synthase (350 aa).

In terms of domain architecture, Radical SAM core spans Arg54–Ser278. Positions 69, 73, and 76 each coordinate [4Fe-4S] cluster. [2Fe-2S] cluster-binding residues include Cys113, Cys144, Cys204, and Arg276.

Belongs to the radical SAM superfamily. Biotin synthase family. In terms of assembly, homodimer. It depends on [4Fe-4S] cluster as a cofactor. Requires [2Fe-2S] cluster as cofactor.

The enzyme catalyses (4R,5S)-dethiobiotin + (sulfur carrier)-SH + 2 reduced [2Fe-2S]-[ferredoxin] + 2 S-adenosyl-L-methionine = (sulfur carrier)-H + biotin + 2 5'-deoxyadenosine + 2 L-methionine + 2 oxidized [2Fe-2S]-[ferredoxin]. It functions in the pathway cofactor biosynthesis; biotin biosynthesis; biotin from 7,8-diaminononanoate: step 2/2. In terms of biological role, catalyzes the conversion of dethiobiotin (DTB) to biotin by the insertion of a sulfur atom into dethiobiotin via a radical-based mechanism. The sequence is that of Biotin synthase from Neisseria meningitidis serogroup C (strain 053442).